The following is a 101-amino-acid chain: Urease subunit beta (101 aa).

It belongs to the urease beta subunit family. In terms of assembly, heterotrimer of UreA (gamma), UreB (beta) and UreC (alpha) subunits. Three heterotrimers associate to form the active enzyme.

The protein resides in the cytoplasm. It carries out the reaction urea + 2 H2O + H(+) = hydrogencarbonate + 2 NH4(+). Its pathway is nitrogen metabolism; urea degradation; CO(2) and NH(3) from urea (urease route): step 1/1. The polypeptide is Urease subunit beta (Ralstonia pickettii (strain 12J)).